Here is a 495-residue protein sequence, read N- to C-terminus: Lysine--tRNA ligase (495 aa).

2 residues coordinate Mg(2+): Glu406 and Glu413.

The protein belongs to the class-II aminoacyl-tRNA synthetase family. In terms of assembly, homodimer. Mg(2+) is required as a cofactor.

The protein resides in the cytoplasm. It carries out the reaction tRNA(Lys) + L-lysine + ATP = L-lysyl-tRNA(Lys) + AMP + diphosphate. The protein is Lysine--tRNA ligase of Leptospira interrogans serogroup Icterohaemorrhagiae serovar Lai (strain 56601).